A 1860-amino-acid polypeptide reads, in one-letter code: Collagen alpha-1(XXVII) chain (1860 aa).

An N-terminal signal peptide occupies residues 1–41 (MGAGSARGARGTAAAAAARGGGFLFSWILVSFACHLASTQG). A propeptide spans 42 to 624 (APEDVDILQR…AGSTPFPLLM (583 aa)) (N-terminal propeptide). The 166-residue stretch at 71-236 (QSGFIFTQRA…NYCTHLRKQC (166 aa)) folds into the Laminin G-like domain. A glycan (N-linked (GlcNAc...) asparagine) is linked at N271. Disordered stretches follow at residues 278 to 608 (ALGS…TSSG), 625 to 772 (GPPG…GSDG), and 851 to 1625 (LKGD…IQLQ). 2 stretches are compositionally biased toward polar residues: residues 298 to 309 (TKPQRTSPTNPH) and 386 to 409 (HPTQ…QVPP). The span at 432–445 (MPRPPPPSTRPLPP) shows a compositional bias: pro residues. Composition is skewed to low complexity over residues 446–457 (TTSSSKKPIPTL) and 485–505 (TALS…RPPA). The span at 509–518 (PPTSGTSTPR) shows a compositional bias: polar residues. Low complexity-rich tracts occupy residues 572-588 (TTRP…QTTP) and 599-608 (SSSPRPTSSG). Collagen-like domains follow at residues 625–679 (GPPG…GDPG), 688–747 (GAKG…PGPV), 748–807 (GDPG…DGNP), 808–867 (GELG…SGDP), 871–930 (GDKG…KGKP), 931–990 (GARG…PGPV), 1003–1062 (GEPG…RGAK), 1066–1125 (GPRG…PGTK), 1126–1185 (GLPG…IGQR), 1192–1251 (GDSG…QGEK), 1258–1317 (GAKG…KGIV), 1318–1378 (GPLG…RGKP), 1382–1441 (GQPG…EGIA), 1442–1501 (GPDG…PGQL), 1502–1561 (GPPG…QGPR), and 1562–1621 (GPPG…PGGP). The triple-helical region stretch occupies residues 625-1618 (GPPGPKGDCG…RGRPGPPGPP (994 aa)). Pro residues predominate over residues 654 to 669 (RGPPGPYGNPGLPGPP). Residues 714–734 (PGPAGHPGEQGQPGPEGSPGA) show a composition bias toward low complexity. Composition is skewed to low complexity over residues 911–924 (FPGD…NGPE) and 932–944 (ARGL…QLGP). Positions 1033–1042 (GMPGGMGTPG) are enriched in gly residues. A compositionally biased stretch (pro residues) spans 1043 to 1053 (EPGPQGPPGSR). Residues 1130 to 1142 (EPGPQGPQGPIGP) are compositionally biased toward pro residues. Composition is skewed to basic and acidic residues over residues 1202-1220 (LKGD…EKGQ) and 1241-1253 (PEGK…EKGR). Composition is skewed to basic and acidic residues over residues 1326-1338 (KGEK…DGKA) and 1350-1360 (PVGDRGDRGEP). Low complexity predominate over residues 1449 to 1458 (RDGQAGQQGE). A compositionally biased stretch (low complexity) spans 1572 to 1587 (IVGPLGILGPSGLPGP). Residues 1603 to 1620 (RGPPGPRGRPGPPGPPGG) show a composition bias toward pro residues. Residues 1622 to 1860 (IQLQQDDLGA…RLEVGPACFL (239 aa)) constitute a propeptide, C-terminal propeptide. The Fibrillar collagen NC1 domain occupies 1660–1860 (GEIFKTLHYL…RLEVGPACFL (201 aa)). 3 disulfides stabilise this stretch: C1690-C1722, C1731-C1858, and C1767-C1811. The Ca(2+) site is built by D1708, N1710, C1713, and D1716. The N-linked (GlcNAc...) asparagine glycan is linked to N1769.

Belongs to the fibrillar collagen family.

Its subcellular location is the secreted. It localises to the extracellular space. It is found in the extracellular matrix. Functionally, plays a role during the calcification of cartilage and the transition of cartilage to bone. In Homo sapiens (Human), this protein is Collagen alpha-1(XXVII) chain (COL27A1).